The chain runs to 266 residues: Glutamate racemase (266 aa).

Substrate contacts are provided by residues 9 to 10 (DS) and 41 to 42 (YG). Cys72 (proton donor/acceptor) is an active-site residue. Position 73–74 (73–74 (NT)) interacts with substrate. The active-site Proton donor/acceptor is the Cys184. 185-186 (TH) lines the substrate pocket.

This sequence belongs to the aspartate/glutamate racemases family.

The enzyme catalyses L-glutamate = D-glutamate. Its pathway is cell wall biogenesis; peptidoglycan biosynthesis. In terms of biological role, provides the (R)-glutamate required for cell wall biosynthesis. This chain is Glutamate racemase, found in Staphylococcus haemolyticus (strain JCSC1435).